A 661-amino-acid chain; its full sequence is Pumilio domain-containing protein C56F2.08c (661 aa).

In terms of domain architecture, RRM spans M1 to P74. At S102 the chain carries Phosphoserine. Residue T104 is modified to Phosphothreonine. S105 is modified (phosphoserine). In terms of domain architecture, PUM-HD spans I129 to S482. 4 Pumilio repeats span residues S191–E226, R227–K263, H264–R302, and H374–K410. Phosphoserine occurs at positions 482, 486, 488, and 490.

Its subcellular location is the cytoplasm. The sequence is that of Pumilio domain-containing protein C56F2.08c from Schizosaccharomyces pombe (strain 972 / ATCC 24843) (Fission yeast).